The sequence spans 929 residues: Urea transporter 2 (929 aa).

Positions 1–11 (MSDHPLKEMSD) are enriched in basic and acidic residues. The tract at residues 1 to 89 (MSDHPLKEMS…KRRESELPRR (89 aa)) is disordered. Residues 31-42 (SELSSPTWPSSS) show a composition bias toward low complexity. A compositionally biased stretch (basic and acidic residues) spans 55 to 88 (PEEKDLRSSDEDSHIVKIEKPNERSKRRESELPR). A run of 9 helical transmembrane segments spans residues 133–155 (GAAQ…GLLI), 162–179 (IAGA…LALS), 184–204 (AIAS…VAVF), 212–232 (WWLL…SSAL), 241–261 (LPVF…ATGH), 310–330 (GGVI…HAAI), 349–371 (IYTG…MFYV), 378–399 (LLAL…NMMA), and 400–420 (VVGV…FLLL). A disordered region spans residues 451–480 (SDEQKPPNGGGGEQSHGGGQRKAEEGSETV). A compositionally biased stretch (gly residues) spans 458–470 (NGGGGEQSHGGGQ). Serine 486 is modified (phosphoserine). The next 4 membrane-spanning stretches (helical) occupy residues 609 to 629 (GILI…SGCL), 647 to 667 (AIAA…MAVF), 675 to 695 (WWLL…SSAL), and 704 to 724 (LPVF…ATGH). The N-linked (GlcNAc...) asparagine glycan is linked to asparagine 742. The next 4 membrane-spanning stretches (helical) occupy residues 773–793 (GGIF…HAAI), 812–832 (IYFG…GGMF), 841–861 (LLAI…ANML), and 863–883 (VFGL…FLLL).

This sequence belongs to the urea transporter family. In terms of assembly, interacts with SNAPIN which enhances its urea transport activity. As to expression, expressed in the inner medulla of the kidney. In terms of tissue distribution, expressed in both the inner and outer renal medulla of the kidney.

It is found in the apical cell membrane. The protein localises to the cell membrane. It carries out the reaction urea(in) = urea(out). With respect to regulation, inhibited by phloretin. Activated by vasopressin, forskolin, 3-isobutyl-1-methylxanthine (IBMX) and cAMP. Inhibited by phloretin. Its activity is regulated as follows. Inhibited by urea analogs and phloretin and activated by forskolin. With respect to regulation, inhibited by phloretin and activated by forskolin. Mediates the transport of urea driven by a concentration gradient across the cell membrane of the kidney inner medullary collecting duct which is critical to the urinary concentrating mechanism. This Rattus norvegicus (Rat) protein is Urea transporter 2 (Slc14a2).